The chain runs to 205 residues: Urease accessory protein UreG (205 aa).

Residue 14–21 coordinates GTP; the sequence is GPVGSGKT.

This sequence belongs to the SIMIBI class G3E GTPase family. UreG subfamily. Homodimer. UreD, UreF and UreG form a complex that acts as a GTP-hydrolysis-dependent molecular chaperone, activating the urease apoprotein by helping to assemble the nickel containing metallocenter of UreC. The UreE protein probably delivers the nickel.

The protein resides in the cytoplasm. Functionally, facilitates the functional incorporation of the urease nickel metallocenter. This process requires GTP hydrolysis, probably effectuated by UreG. The chain is Urease accessory protein UreG from Proteus mirabilis (strain HI4320).